Consider the following 338-residue polypeptide: Phenylalanine--tRNA ligase alpha subunit (338 aa).

Glu-253 is a Mg(2+) binding site.

Belongs to the class-II aminoacyl-tRNA synthetase family. Phe-tRNA synthetase alpha subunit type 1 subfamily. As to quaternary structure, tetramer of two alpha and two beta subunits. Mg(2+) is required as a cofactor.

The protein localises to the cytoplasm. It carries out the reaction tRNA(Phe) + L-phenylalanine + ATP = L-phenylalanyl-tRNA(Phe) + AMP + diphosphate + H(+). The chain is Phenylalanine--tRNA ligase alpha subunit from Citrifermentans bemidjiense (strain ATCC BAA-1014 / DSM 16622 / JCM 12645 / Bem) (Geobacter bemidjiensis).